The primary structure comprises 283 residues: MFS-type transporter eupM (283 aa).

The next 7 membrane-spanning stretches (helical) occupy residues 68 to 88, 111 to 131, 136 to 156, 165 to 185, 196 to 216, 227 to 247, and 263 to 283; these read LVAWLQVLGAWVLFFNTWGAM, IAWIGSIQTFCLQAMGLVAGP, GGFKILIVTGSVGVVSGYMML, VLLAQGFLIGIAEGCLFTPMI, IGLATGIASSGSSMGGVVYPI, FAWTTRVLGFISLGMLLIPII, and LIDLSVFTDWPFIVFVIATMI.

Belongs to the major facilitator superfamily. Monocarboxylate porter (TC 2.A.1.13) family.

The protein localises to the membrane. Its function is as follows. MFS-type transporter; part of the gene cluster that mediates the biosynthesis of eupenifeldin, a bistropolone meroterpenoid that acts as an antitumor agent. The sequence is that of MFS-type transporter eupM from Phoma sp.